Consider the following 89-residue polypeptide: Small ribosomal subunit protein uS15 (89 aa).

The protein belongs to the universal ribosomal protein uS15 family. Part of the 30S ribosomal subunit. Forms a bridge to the 50S subunit in the 70S ribosome, contacting the 23S rRNA.

Its function is as follows. One of the primary rRNA binding proteins, it binds directly to 16S rRNA where it helps nucleate assembly of the platform of the 30S subunit by binding and bridging several RNA helices of the 16S rRNA. Forms an intersubunit bridge (bridge B4) with the 23S rRNA of the 50S subunit in the ribosome. The polypeptide is Small ribosomal subunit protein uS15 (Aliivibrio fischeri (strain ATCC 700601 / ES114) (Vibrio fischeri)).